A 90-amino-acid polypeptide reads, in one-letter code: Small ribosomal subunit protein bS16 (90 aa).

Belongs to the bacterial ribosomal protein bS16 family.

In Heliobacterium modesticaldum (strain ATCC 51547 / Ice1), this protein is Small ribosomal subunit protein bS16.